Here is an 85-residue protein sequence, read N- to C-terminus: Small ribosomal subunit protein uS17 (85 aa).

Belongs to the universal ribosomal protein uS17 family. As to quaternary structure, part of the 30S ribosomal subunit.

One of the primary rRNA binding proteins, it binds specifically to the 5'-end of 16S ribosomal RNA. The sequence is that of Small ribosomal subunit protein uS17 from Acinetobacter baumannii (strain AB307-0294).